The following is a 213-amino-acid chain: Putative transmembrane protein DDB_G0267860 (213 aa).

The N-terminal stretch at 1–22 (MKTKILLLNFIIIFFLINVNLA) is a signal peptide. Topologically, residues 23-191 (IKKDSPFKEI…SSKFDSSTSS (169 aa)) are extracellular. 2 N-linked (GlcNAc...) asparagine glycosylation sites follow: Asn-92 and Asn-114. A helical transmembrane segment spans residues 192 to 212 (ISINTLAILSLLFLIFINKLI). A topological domain (cytoplasmic) is located at residue Asn-213.

Its subcellular location is the membrane. The chain is Putative transmembrane protein DDB_G0267860 from Dictyostelium discoideum (Social amoeba).